The primary structure comprises 1765 residues: Sodium channel protein type 11 subunit alpha (1765 aa).

At 1–126 (MEERYYPVIF…PIRSFMIRIS (126 aa)) the chain is on the cytoplasmic side. The stretch at 115-406 (FNPIRSFMIR…VTMAYEEQNR (292 aa)) is one I repeat. The helical transmembrane segment at 127-148 (VHSVFSMFIICTVIINCMFMAN) threads the bilayer. Asparagine 149 is a glycosylation site (N-linked (GlcNAc...) asparagine). Residues 149–159 (NSSVDSRPSSN) are Extracellular-facing. Residues 160–179 (IPEYVFIGIYVLEAVIKILA) form a helical membrane-spanning segment. The Cytoplasmic segment spans residues 180 to 191 (RGFIVDEFSYLR). The helical transmembrane segment at 192-211 (DPWNWLDFIVIGTAIAPCFL) threads the bilayer. Residues 212-219 (GNKVNNLS) lie on the Extracellular side of the membrane. An N-linked (GlcNAc...) asparagine glycan is attached at asparagine 217. A helical; Voltage-sensor transmembrane segment spans residues 220-239 (TLRTFRVLRALKAISVISGL). Residues 240–255 (KVIVGALLRSVKKLVD) lie on the Cytoplasmic side of the membrane. A helical transmembrane segment spans residues 256-269 (VMVLTLFCLSIFAL). Residues 270–342 (VGQQLFMGIL…PDYNYTNFDS (73 aa)) are Extracellular-facing. A disulfide bridge connects residues cysteine 283 and cysteine 320. Asparagine 303, asparagine 327, and asparagine 336 each carry an N-linked (GlcNAc...) asparagine glycan. Positions 343-367 (FGWSFLAMFRVMTQDSWEKLYRQIL) form an intramembrane region, pore-forming. Over 368-374 (RTSGIYF) the chain is Extracellular. Residues 375 to 400 (VFFFVVVIFLGSFYLLNLTLAVVTMA) traverse the membrane as a helical segment. The Cytoplasmic segment spans residues 401–570 (YEEQNRNVAA…WLCIKKVLQT (170 aa)). Residues 470 to 490 (RGSKTARASASDSEDDASKNP) form a disordered region. One copy of the II repeat lies at 557–821 (CSPPWLCIKK…EGETRKTKVQ (265 aa)). A helical transmembrane segment spans residues 571–594 (IMTDPFTELAITICIIVNTVFLAM). Residues 595–605 (EHHNMDNSLKD) lie on the Extracellular side of the membrane. Residues 606–629 (ILKIGNWVFTGIFIAEMCLKIIAL) form a helical membrane-spanning segment. The Cytoplasmic segment spans residues 630–637 (DPYHYFRH). Residues 638–659 (GWNIFDSIVALVSLADVLFHKL) traverse the membrane as a helical segment. Topologically, residues 660-664 (SKNLS) are extracellular. Residue asparagine 662 is glycosylated (N-linked (GlcNAc...) asparagine). A helical; Voltage-sensor transmembrane segment spans residues 665–684 (FLASLRVLRVFKLAKSWPTL). Topologically, residues 685–699 (NTLIKIIGHSVGALG) are cytoplasmic. A helical membrane pass occupies residues 700 to 722 (NLTVVLTIVVFIFSVVGMRLFGA). The Extracellular portion of the chain corresponds to 723–742 (KFNKTCSTSPESLRRWHMGD). Asparagine 725 carries an N-linked (GlcNAc...) asparagine glycan. The segment at residues 743–763 (FYHSFLVVFRILCGEWIENMW) is an intramembrane region (pore-forming). The Extracellular segment spans residues 764-773 (ECMQEMEGSP). An intrachain disulfide couples cysteine 765 to cysteine 775. Residues 774-799 (LCVIVFVLIMVVGKLVVLNLFIALLL) form a helical membrane-spanning segment. The Cytoplasmic segment spans residues 800 to 1030 (NSFSNEEKDG…WWNLRKTCYQ (231 aa)). The tract at residues 850–869 (NSPKPNEATESFAGESRDTA) is disordered. An III repeat occupies 1023–1320 (NLRKTCYQIV…KKYYNAMKKL (298 aa)). A helical transmembrane segment spans residues 1031–1053 (IVKHSWFESFIIFVILLSSGALI). Residues 1054–1067 (FEDVNLPSRPQVEK) lie on the Extracellular side of the membrane. A helical membrane pass occupies residues 1068 to 1093 (LLKCTDNIFTFIFLLEMILKWVAFGF). The Cytoplasmic segment spans residues 1094–1099 (RKYFTS). Residues 1100-1117 (AWCWLDFLIVVVSGLSLT) form a helical membrane-spanning segment. Asparagine 1118 is a topological domain (extracellular). The chain crosses the membrane as a helical; Voltage-sensor span at residues 1119 to 1140 (LPNLKSFRNLRALRPLRALSQF). Topologically, residues 1141-1159 (EGMKVVVNALMSAIPAILN) are cytoplasmic. Residues 1160-1181 (VLLVCLIFWLIFCILGVNFFSG) form a helical membrane-spanning segment. At 1182–1224 (KFGRCINGTDINKYFNASNVPNQSQCLVSNYTWKVPNVNFDNV) the chain is on the extracellular side. Residues asparagine 1188, asparagine 1197, asparagine 1203, and asparagine 1211 are each glycosylated (N-linked (GlcNAc...) asparagine). An intramembrane region (pore-forming) is located at residues 1225-1246 (GNAYLALLQVATYKGWLDIMNA). Topologically, residues 1247–1262 (AVDSRGKDEQPAFEAN) are extracellular. The chain crosses the membrane as a helical span at residues 1263 to 1289 (LYAYLYFVVFIIFGSFFTLNLFIGVII). Residues 1290 to 1342 (DNFNQQQKKLGGQDIFMTEEQKKYYNAMKKLGTKKPQKPIPRPLNKCQAFVFD) are Cytoplasmic-facing. The stretch at 1329 to 1619 (IPRPLNKCQA…WEKFDPEATQ (291 aa)) is one IV repeat. The chain crosses the membrane as a helical span at residues 1343 to 1366 (LVTSQVFDVIILGLIVTNMIIMMA). Residues 1367–1377 (ESEGQPNEVKK) lie on the Extracellular side of the membrane. Residues 1378 to 1401 (IFDILNIVFVVIFTVECLIKVFAL) form a helical membrane-spanning segment. The Cytoplasmic portion of the chain corresponds to 1402-1407 (RQHYFT). Residues 1408–1431 (NGWNLFDCVVVVLSIISTLVSGLE) form a helical membrane-spanning segment. Topologically, residues 1432-1440 (NSNVFPPTL) are extracellular. Residues 1441–1463 (FRIVRLARIGRILRLVRAARGIR) form a helical; Voltage-sensor membrane-spanning segment. The Cytoplasmic portion of the chain corresponds to 1464–1478 (TLLFALMMSLPSLFN). Residues 1479-1501 (IGLLLFLVMFIYAIFGMNWFSKV) traverse the membrane as a helical segment. At 1502 to 1515 (KRGSGIDDIFNFDT) the chain is on the extracellular side. Residues 1516 to 1538 (FSGSMLCLFQITTSAGWDALLNP) constitute an intramembrane region (pore-forming). Residues 1539-1559 (MLESKASCNSSSQESCQQPQI) lie on the Extracellular side of the membrane. The helical transmembrane segment at 1560-1584 (AIVYFVSYIIISFLIVVNMYIAVIL) threads the bilayer. Residues 1585-1765 (ENFNTATEES…DVPKIKVHCD (181 aa)) lie on the Cytoplasmic side of the membrane.

This sequence belongs to the sodium channel (TC 1.A.1.10) family. Nav1.9/SCN11A subfamily. The voltage-resistant sodium channel consists of an ion conducting pore forming alpha-subunit regulated by one or more auxiliary subunits SCN1B, SCN2B and SCN3B. In terms of tissue distribution, expressed in the dorsal root ganglia (C-fiber neurons), spinal cord, trigeminal ganglia, testis, ovary, uterus and small intestine.

Its subcellular location is the cell membrane. It catalyses the reaction Na(+)(in) = Na(+)(out). Its function is as follows. Sodium channel mediating the voltage-dependent sodium ion permeability of excitable membranes. Assuming opened or closed conformations in response to the voltage difference across the membrane, the protein forms a sodium-selective channel through which sodium ions may pass in accordance with their electrochemical gradient. Involved in membrane depolarization during action potential in nociceptors which function as key relay stations for the electrical transmission of pain signals from the periphery to the central nervous system. Also involved in rapid BDNF-evoked neuronal depolarization. In Mus musculus (Mouse), this protein is Sodium channel protein type 11 subunit alpha.